The primary structure comprises 410 residues: 2-epi-5-epi-valiolone synthase (410 aa).

Residues D66, 97-100 (ETLK), 130-134 (GVLMD), 154-155 (TT), K167, K176, and 194-197 (FLAT) contribute to the NAD(+) site. Residue K167 is part of the active site. 3 residues coordinate a divalent metal cation: E209, H280, and H296.

Belongs to the sugar phosphate cyclases superfamily. EEVS family. Requires NAD(+) as cofactor. Co(2+) serves as cofactor.

The enzyme catalyses D-sedoheptulose 7-phosphate = 2-epi-5-epi-valiolone + phosphate. Functionally, catalyzes the cyclization of D-sedoheptulose 7-phosphate to 2-epi-5-epi-valiolone. Involved in salbostatin biosynthesis. The polypeptide is 2-epi-5-epi-valiolone synthase (Streptomyces albus (strain ATCC 21838 / DSM 41398 / FERM P-419 / JCM 4703 / NBRC 107858)).